The chain runs to 561 residues: Urocanate hydratase (561 aa).

NAD(+) is bound by residues 52–53 (GG), Gln130, 176–178 (GMG), Glu196, Arg201, 242–243 (NA), 263–267 (QTSAH), 273–274 (YL), and Tyr322. Residue Cys410 is part of the active site. An NAD(+)-binding site is contributed by Gly492.

The protein belongs to the urocanase family. NAD(+) serves as cofactor.

Its subcellular location is the cytoplasm. It carries out the reaction 4-imidazolone-5-propanoate = trans-urocanate + H2O. Its pathway is amino-acid degradation; L-histidine degradation into L-glutamate; N-formimidoyl-L-glutamate from L-histidine: step 2/3. Catalyzes the conversion of urocanate to 4-imidazolone-5-propionate. In Salmonella gallinarum (strain 287/91 / NCTC 13346), this protein is Urocanate hydratase.